The sequence spans 187 residues: Ribosome maturation factor RimM (187 aa).

The PRC barrel domain maps to Lys111–Phe187.

The protein belongs to the RimM family. As to quaternary structure, binds ribosomal protein uS19.

It is found in the cytoplasm. Functionally, an accessory protein needed during the final step in the assembly of 30S ribosomal subunit, possibly for assembly of the head region. Essential for efficient processing of 16S rRNA. May be needed both before and after RbfA during the maturation of 16S rRNA. It has affinity for free ribosomal 30S subunits but not for 70S ribosomes. This is Ribosome maturation factor RimM from Albidiferax ferrireducens (strain ATCC BAA-621 / DSM 15236 / T118) (Rhodoferax ferrireducens).